A 154-amino-acid polypeptide reads, in one-letter code: Myoglobin (154 aa).

Residues 2-148 (GLSDGEWQLV…FRNDMAAKYK (147 aa)) enclose the Globin domain. Ser-4 is modified (phosphoserine). His-65 is a nitrite binding site. His-65 lines the O2 pocket. The residue at position 68 (Thr-68) is a Phosphothreonine. His-94 contributes to the heme b binding site.

It belongs to the globin family. Monomeric.

It localises to the cytoplasm. The protein localises to the sarcoplasm. It catalyses the reaction Fe(III)-heme b-[protein] + nitric oxide + H2O = Fe(II)-heme b-[protein] + nitrite + 2 H(+). The catalysed reaction is H2O2 + AH2 = A + 2 H2O. Monomeric heme protein which primary function is to store oxygen and facilitate its diffusion within muscle tissues. Reversibly binds oxygen through a pentacoordinated heme iron and enables its timely and efficient release as needed during periods of heightened demand. Depending on the oxidative conditions of tissues and cells, and in addition to its ability to bind oxygen, it also has a nitrite reductase activity whereby it regulates the production of bioactive nitric oxide. Under stress conditions, like hypoxia and anoxia, it also protects cells against reactive oxygen species thanks to its pseudoperoxidase activity. The sequence is that of Myoglobin (MB) from Erythrocebus patas (Red guenon).